The chain runs to 234 residues: tRNA (guanine-N(1)-)-methyltransferase (234 aa).

S-adenosyl-L-methionine is bound by residues G115 and 135-140; that span reads VGDYIL.

It belongs to the RNA methyltransferase TrmD family. In terms of assembly, homodimer.

The protein localises to the cytoplasm. The enzyme catalyses guanosine(37) in tRNA + S-adenosyl-L-methionine = N(1)-methylguanosine(37) in tRNA + S-adenosyl-L-homocysteine + H(+). Specifically methylates guanosine-37 in various tRNAs. The sequence is that of tRNA (guanine-N(1)-)-methyltransferase from Rickettsia africae (strain ESF-5).